Consider the following 418-residue polypeptide: UPF0261 protein BMEII0128 (418 aa).

Belongs to the UPF0261 family.

This chain is UPF0261 protein BMEII0128, found in Brucella melitensis biotype 1 (strain ATCC 23456 / CCUG 17765 / NCTC 10094 / 16M).